The following is a 331-amino-acid chain: MRRGLLLLNLGTPDNADIRAVKLYLREFLTDKRVIDLPTIPRYILVYCLILPFRSPKSAQAYQSIWTEKGSPLLYHSQNLVTKLQSSLKDEYKIALGMRYGTPSITTALAELKDCHSLTILPLFPQYSSAATGSAIEKTLSYLANQEIIPSIKIIRDFYQRPEYIQAQAKIMKPYIKDNFHVLFSYHGIPERHIHKSGCDTLCPQTCTPIYDKNQACYRAQCYQTSLLLAKELQLGTHQYTTAFQSRLGKTPWIKPYTDEIFAELISKGIKNIVVSCPSFVADCLETLEEIGIRAKEQWEKLGGEQFILTPCMNDHPEWIKAIHSIVNEQI.

Residues His-187 and Glu-286 each coordinate Fe cation.

This sequence belongs to the ferrochelatase family.

It is found in the cytoplasm. The enzyme catalyses heme b + 2 H(+) = protoporphyrin IX + Fe(2+). It participates in porphyrin-containing compound metabolism; protoheme biosynthesis; protoheme from protoporphyrin-IX: step 1/1. Functionally, catalyzes the ferrous insertion into protoporphyrin IX. In Legionella pneumophila (strain Paris), this protein is Ferrochelatase.